A 497-amino-acid polypeptide reads, in one-letter code: Guanosine-5'-triphosphate,3'-diphosphate pyrophosphatase (497 aa).

It belongs to the GppA/Ppx family. GppA subfamily.

The enzyme catalyses guanosine 3'-diphosphate 5'-triphosphate + H2O = guanosine 3',5'-bis(diphosphate) + phosphate + H(+). It functions in the pathway purine metabolism; ppGpp biosynthesis; ppGpp from GTP: step 2/2. Functionally, catalyzes the conversion of pppGpp to ppGpp. Guanosine pentaphosphate (pppGpp) is a cytoplasmic signaling molecule which together with ppGpp controls the 'stringent response', an adaptive process that allows bacteria to respond to amino acid starvation, resulting in the coordinated regulation of numerous cellular activities. This Aliivibrio fischeri (strain MJ11) (Vibrio fischeri) protein is Guanosine-5'-triphosphate,3'-diphosphate pyrophosphatase.